A 505-amino-acid chain; its full sequence is Probable alpha-L-arabinofuranosidase C (505 aa).

N-linked (GlcNAc...) asparagine glycans are attached at residues Asn-152, Asn-269, and Asn-438.

This sequence belongs to the glycosyl hydrolase 51 family.

Its subcellular location is the secreted. It carries out the reaction Hydrolysis of terminal non-reducing alpha-L-arabinofuranoside residues in alpha-L-arabinosides.. It functions in the pathway glycan metabolism; L-arabinan degradation. Its function is as follows. Alpha-L-arabinofuranosidase involved in the degradation of arabinoxylan, a major component of plant hemicellulose. Acts only on small linear 1,5-alpha-linked L-arabinofuranosyl oligosaccharides. This Aspergillus clavatus (strain ATCC 1007 / CBS 513.65 / DSM 816 / NCTC 3887 / NRRL 1 / QM 1276 / 107) protein is Probable alpha-L-arabinofuranosidase C (abfC).